We begin with the raw amino-acid sequence, 509 residues long: GMP synthase [glutamine-hydrolyzing] (509 aa).

Residues 4–193 (NVLILDFGSQ…LIKIAGTKAT (190 aa)) form the Glutamine amidotransferase type-1 domain. The active-site Nucleophile is C79. Active-site residues include H167 and E169. Residues 194-384 (WTPGKFVDLT…LGIDKELLGR (191 aa)) enclose the GMPS ATP-PPase domain. 221 to 227 (SGGVDST) provides a ligand contact to ATP.

Homodimer.

It catalyses the reaction XMP + L-glutamine + ATP + H2O = GMP + L-glutamate + AMP + diphosphate + 2 H(+). It functions in the pathway purine metabolism; GMP biosynthesis; GMP from XMP (L-Gln route): step 1/1. Its function is as follows. Catalyzes the synthesis of GMP from XMP. The polypeptide is GMP synthase [glutamine-hydrolyzing] (Christiangramia forsetii (strain DSM 17595 / CGMCC 1.15422 / KT0803) (Gramella forsetii)).